We begin with the raw amino-acid sequence, 378 residues long: Putative UDP-N-acetylglucosamine 2-epimerase (378 aa).

This sequence belongs to the UDP-N-acetylglucosamine 2-epimerase family.

The protein localises to the cytoplasm. It carries out the reaction UDP-N-acetyl-alpha-D-glucosamine = UDP-N-acetyl-alpha-D-mannosamine. This is Putative UDP-N-acetylglucosamine 2-epimerase from Thermotoga maritima (strain ATCC 43589 / DSM 3109 / JCM 10099 / NBRC 100826 / MSB8).